Consider the following 297-residue polypeptide: MQAYDDEIVGTALASNVLALADRVRTADGVEALSEQHRLALEHPGLRAHHLVVTDPAGAVVGYASVLGSSVEMLVDAAHRGEGVGHRLAEAALAVEPTLAFWAHGDLPGAAQLAEAIGLRRVRELWHLGRDLAPAGAGGDEAALLATPLPGGERLRTFGGTEAEEHAWLALNARAFASHPEQGAMTLEDLRVREGETWFDPSLLWLVHDDGDGALLASMWLKVPDAATGEIYVLGVDPGAQGRGLGRALTDRALDVLRARGVDRVELYVEGENARARALYEHSGFTPVAVHAQYGIP.

Glutamate 35 serves as a coordination point for 1D-myo-inositol 2-(L-cysteinylamino)-2-deoxy-alpha-D-glucopyranoside. Methionine 73–valine 75 contacts acetyl-CoA. One can recognise an N-acetyltransferase domain in the interval leucine 155–proline 297. 1D-myo-inositol 2-(L-cysteinylamino)-2-deoxy-alpha-D-glucopyranoside-binding residues include glutamate 181, lysine 222, and glutamate 230. Acetyl-CoA contacts are provided by residues leucine 234 to valine 236 and glutamine 241 to arginine 247. Tyrosine 268 contributes to the 1D-myo-inositol 2-(L-cysteinylamino)-2-deoxy-alpha-D-glucopyranoside binding site.

The protein belongs to the acetyltransferase family. MshD subfamily. As to quaternary structure, monomer.

It carries out the reaction 1D-myo-inositol 2-(L-cysteinylamino)-2-deoxy-alpha-D-glucopyranoside + acetyl-CoA = mycothiol + CoA + H(+). In terms of biological role, catalyzes the transfer of acetyl from acetyl-CoA to desacetylmycothiol (Cys-GlcN-Ins) to form mycothiol. This Beutenbergia cavernae (strain ATCC BAA-8 / DSM 12333 / CCUG 43141 / JCM 11478 / NBRC 16432 / NCIMB 13614 / HKI 0122) protein is Mycothiol acetyltransferase.